The primary structure comprises 180 residues: NAD(P)H-quinone oxidoreductase subunit J (180 aa).

The span at methionine 1 to glycine 16 shows a compositional bias: polar residues. Residues methionine 1–proline 23 are disordered.

Belongs to the complex I 30 kDa subunit family. NDH-1 can be composed of about 15 different subunits; different subcomplexes with different compositions have been identified which probably have different functions.

Its subcellular location is the cellular thylakoid membrane. The catalysed reaction is a plastoquinone + NADH + (n+1) H(+)(in) = a plastoquinol + NAD(+) + n H(+)(out). The enzyme catalyses a plastoquinone + NADPH + (n+1) H(+)(in) = a plastoquinol + NADP(+) + n H(+)(out). In terms of biological role, NDH-1 shuttles electrons from an unknown electron donor, via FMN and iron-sulfur (Fe-S) centers, to quinones in the respiratory and/or the photosynthetic chain. The immediate electron acceptor for the enzyme in this species is believed to be plastoquinone. Couples the redox reaction to proton translocation, and thus conserves the redox energy in a proton gradient. Cyanobacterial NDH-1 also plays a role in inorganic carbon-concentration. The sequence is that of NAD(P)H-quinone oxidoreductase subunit J from Prochlorococcus marinus (strain MIT 9211).